Reading from the N-terminus, the 232-residue chain is 7-cyano-7-deazaguanine synthase (232 aa).

An ATP-binding site is contributed by 13–23 (LSGGLDSATVL). Zn(2+)-binding residues include Cys194, Cys204, Cys207, and Cys210.

It belongs to the QueC family. Zn(2+) serves as cofactor.

It catalyses the reaction 7-carboxy-7-deazaguanine + NH4(+) + ATP = 7-cyano-7-deazaguanine + ADP + phosphate + H2O + H(+). It participates in purine metabolism; 7-cyano-7-deazaguanine biosynthesis. Catalyzes the ATP-dependent conversion of 7-carboxy-7-deazaguanine (CDG) to 7-cyano-7-deazaguanine (preQ(0)). The chain is 7-cyano-7-deazaguanine synthase from Hydrogenovibrio crunogenus (strain DSM 25203 / XCL-2) (Thiomicrospira crunogena).